Here is a 401-residue protein sequence, read N- to C-terminus: L-rhamnonate dehydratase (401 aa).

Positions 29 and 55 each coordinate substrate. 3 residues coordinate Mg(2+): aspartate 222, glutamate 248, and glutamate 276. The active-site Proton acceptor is histidine 325. Position 345 (glutamate 345) interacts with substrate.

This sequence belongs to the mandelate racemase/muconate lactonizing enzyme family. RhamD subfamily. As to quaternary structure, homooctamer; tetramer of dimers. The cofactor is Mg(2+).

It catalyses the reaction L-rhamnonate = 2-dehydro-3-deoxy-L-rhamnonate + H2O. Catalyzes the dehydration of L-rhamnonate to 2-keto-3-deoxy-L-rhamnonate (KDR). In Salmonella schwarzengrund (strain CVM19633), this protein is L-rhamnonate dehydratase.